The following is a 617-amino-acid chain: MQSQLKACGDAPAPSCSLHHRRTISKKPSNGGNSGGGGGGVNSAYLATDVTTLDINAMFQSKKMKRHGAGVTAPSTPANYLGASAGAGQANPAHFNFPSYLNPASFYPNVDLLGGSSEHLPPLMSVPAYKPTSMLHGFSDAASAMDFAQLTEELNALQNLSASFPNSTPNAFQSLFATDSPSSFLTSSAVSSHLAKPSPLTANSVRGAGGRKNRMVEVKMINERPVVIVSDPQAASASARSQIVHLNRNVLGVLKGLEASKKRSISAEPLYSRKVFIGGLPIDVTEEEVWATFGWFGKVLVDWPRRPEHGGRGDFYEMDMGRRNSRSVSGYVFLVFQDEKAVQELVNACELYENKYYLQLSSPTMADKAVQVRAWRLSDIDYFCDENASVDHRRTVFIGGVPRPTRASDLAYCLQQHYGKVSYVGIDIDPELKYPKGAARVTFATAQSFVRAISGRFVQVTHADTNKRVEIKPYVMEDQHCDECQGKLCKHNYAPYFCGDSSCLQYYCEACWDRMHYAMCDNRADHRPMVRTGDQTRILPRPPHHSTSHYHHRSTPSHHHNHTHQNVTSSLLEHAPHLQNTSIISRIVNRNNQNNNSANSTPPQMKQFSAIPTAIGY.

The tract at residues 1 to 38 (MQSQLKACGDAPAPSCSLHHRRTISKKPSNGGNSGGGG) is disordered. RRM domains are found at residues 273 to 377 (RKVF…AWRL) and 394 to 465 (RTVF…HADT). Disordered regions lie at residues 534-568 (DQTR…QNVT) and 592-617 (NQNN…AIGY). The segment covering 542-563 (PPHHSTSHYHHRSTPSHHHNHT) has biased composition (basic residues).

Interacts with fbf-1.

In terms of biological role, cytoplasmic polyadenylation element binding protein that binds to and regulates the translation of specific mRNAs. Essential for progression through meiosis. Involved in spermatogenesis. This Caenorhabditis japonica protein is Cytoplasmic polyadenylation element-binding protein 1 (cpb-1).